A 216-amino-acid polypeptide reads, in one-letter code: Adenylate kinase (216 aa).

10-15 is a binding site for ATP; it reads GAGKGT. The segment at 30–59 is NMP; it reads STGDIFRYNIKQGTELGKKAKSYMDQGLLV. AMP-binding positions include Thr31, Arg36, 57 to 59, 85 to 88, and Gln92; these read LLV and GFPR. Positions 126–163 are LID; the sequence is GRRICRECGATFHVQYNPSTKGALCDQCGGELYQRDDD. Residue Arg127 coordinates ATP. Positions 130 and 133 each coordinate Zn(2+). 136–137 lines the ATP pocket; the sequence is TF. Zn(2+) contacts are provided by Cys150 and Cys153. Residues Arg160 and Arg171 each coordinate AMP. Residue Lys199 coordinates ATP.

This sequence belongs to the adenylate kinase family. As to quaternary structure, monomer.

The protein localises to the cytoplasm. The catalysed reaction is AMP + ATP = 2 ADP. Its pathway is purine metabolism; AMP biosynthesis via salvage pathway; AMP from ADP: step 1/1. In terms of biological role, catalyzes the reversible transfer of the terminal phosphate group between ATP and AMP. Plays an important role in cellular energy homeostasis and in adenine nucleotide metabolism. This is Adenylate kinase from Alkaliphilus oremlandii (strain OhILAs) (Clostridium oremlandii (strain OhILAs)).